Here is a 91-residue protein sequence, read N- to C-terminus: UPF0335 protein BBta_6866 (91 aa).

The protein belongs to the UPF0335 family.

This chain is UPF0335 protein BBta_6866, found in Bradyrhizobium sp. (strain BTAi1 / ATCC BAA-1182).